The sequence spans 408 residues: Argininosuccinate synthase (408 aa).

ATP-binding positions include 8-16 and alanine 35; that span reads AYSGGLDTT. Positions 86 and 91 each coordinate L-citrulline. Glycine 116 serves as a coordination point for ATP. Residues threonine 118, asparagine 122, and aspartate 123 each coordinate L-aspartate. An L-citrulline-binding site is contributed by asparagine 122. L-citrulline contacts are provided by arginine 126, serine 177, serine 186, glutamate 263, and tyrosine 275.

This sequence belongs to the argininosuccinate synthase family. Type 1 subfamily. Homotetramer.

Its subcellular location is the cytoplasm. It catalyses the reaction L-citrulline + L-aspartate + ATP = 2-(N(omega)-L-arginino)succinate + AMP + diphosphate + H(+). It functions in the pathway amino-acid biosynthesis; L-arginine biosynthesis; L-arginine from L-ornithine and carbamoyl phosphate: step 2/3. In Lachnospira eligens (strain ATCC 27750 / DSM 3376 / VPI C15-48 / C15-B4) (Eubacterium eligens), this protein is Argininosuccinate synthase.